The primary structure comprises 355 residues: Tetraacyldisaccharide 4'-kinase (355 aa).

54–61 (TVGGAGKT) is a binding site for ATP.

The protein belongs to the LpxK family.

It carries out the reaction a lipid A disaccharide + ATP = a lipid IVA + ADP + H(+). The protein operates within glycolipid biosynthesis; lipid IV(A) biosynthesis; lipid IV(A) from (3R)-3-hydroxytetradecanoyl-[acyl-carrier-protein] and UDP-N-acetyl-alpha-D-glucosamine: step 6/6. In terms of biological role, transfers the gamma-phosphate of ATP to the 4'-position of a tetraacyldisaccharide 1-phosphate intermediate (termed DS-1-P) to form tetraacyldisaccharide 1,4'-bis-phosphate (lipid IVA). The sequence is that of Tetraacyldisaccharide 4'-kinase from Rhizobium rhizogenes (strain K84 / ATCC BAA-868) (Agrobacterium radiobacter).